Reading from the N-terminus, the 645-residue chain is Envelope glycoprotein (645 aa).

A signal peptide spans 1 to 33; sequence MESPAFSKPLKDKINPWGPLIIMGILVRAGASV. The segment at 32–237 is receptor-binding domain (RBD); sequence SVQRDSPHQV…QVLNVGPRVP (206 aa). Over 34-585 the chain is Extracellular; sequence QRDSPHQVFN…FNRSPWFTTL (552 aa). 2 N-linked (GlcNAc...) asparagine; by host glycosylation sites follow: N43 and N58. Disulfide bonds link C113/C130 and C122/C135. A disordered region spans residues 260–285; that stretch reads RTPRPPPSGAASMVPGAPPPSQQPGT. A glycan (N-linked (GlcNAc...) asparagine; by host) is linked at N301. Intrachain disulfides connect C311–C314, C311–C538, C341–C395, C360–C372, C402–C415, and C530–C537. The CXXC motif lies at 311–314; the sequence is CWLC. 2 N-linked (GlcNAc...) asparagine; by host glycosylation sites follow: N333 and N340. Residues N373 and N409 are each glycosylated (N-linked (GlcNAc...) asparagine; by host). The segment at 447–467 is fusion peptide; the sequence is VSLTLALLLGGLTMGGIAAGV. The stretch at 490–510 forms a coiled coil; sequence DLGALEKSVSALEKSLTSLSE. Residues 513 to 529 form an immunosuppression region; that stretch reads LQNRRGLDLLFLKEGGL. The short motif at 530–538 is the CX6CC element; the sequence is CAALKEECC. The chain crosses the membrane as a helical span at residues 586–606; sequence ISTIMGPLIVLLLILLFGPCI. The S-palmitoyl cysteine; by host moiety is linked to residue C605. At 607 to 640 the chain is on the cytoplasmic side; it reads LNRLVQFVKDRISVVQALVLTQQYHQLKSIDPEE. Residues 630–633 carry the YXXL motif; contains endocytosis signal motif; that stretch reads YHQL.

In terms of assembly, the mature envelope protein (Env) consists of a trimer of SU-TM heterodimers attached by a labile interchain disulfide bond. The activated Env consists of SU monomers and TM trimers. In terms of processing, specific enzymatic cleavages in vivo yield mature proteins. Envelope glycoproteins are synthesized as an inactive precursor that is N-glycosylated and processed likely by host cell furin or by a furin-like protease in the Golgi to yield the mature SU and TM proteins. The cleavage site between SU and TM requires the minimal sequence [KR]-X-[KR]-R. The R-peptide is released from the C-terminus of the cytoplasmic tail of the TM protein upon particle formation as a result of proteolytic cleavage by the viral protease. Cleavage of this peptide is required for TM to become fusogenic. The CXXC motif is highly conserved across a broad range of retroviral envelope proteins. It is thought to participate in the formation of a labile disulfide bond possibly with the CX6CC motif present in the transmembrane protein. Isomerization of the intersubunit disulfide bond to an SU intrachain disulfide bond is thought to occur upon receptor recognition in order to allow membrane fusion. Post-translationally, the transmembrane protein is palmitoylated. In terms of processing, the R-peptide is palmitoylated.

The protein localises to the virion membrane. The protein resides in the host cell membrane. Functionally, the surface protein (SU) attaches the virus to the host cell by binding to its receptor. This interaction activates a thiol in a CXXC motif of the C-terminal domain, where the other Cys residue participates in the formation of the intersubunit disulfide. The activated thiol will attack the disulfide and cause its isomerization into a disulfide isomer within the motif. This leads to SU displacement and TM refolding, and is thought to activate its fusogenic potential by unmasking its fusion peptide. Fusion occurs at the host cell plasma membrane. Its function is as follows. The transmembrane protein (TM) acts as a class I viral fusion protein. Under the current model, the protein has at least 3 conformational states: pre-fusion native state, pre-hairpin intermediate state, and post-fusion hairpin state. During viral and target cell membrane fusion, the coiled coil regions (heptad repeats) assume a trimer-of-hairpins structure, positioning the fusion peptide in close proximity to the C-terminal region of the ectodomain. The formation of this structure appears to drive apposition and subsequent fusion of viral and target cell membranes. Membranes fusion leads to delivery of the nucleocapsid into the cytoplasm. The chain is Envelope glycoprotein (env) from Homo sapiens (Human).